The chain runs to 625 residues: MNNFILLEEQLIKKSQQKRRTSPSNFKVRFFVLTKASLAYFEDRHGKKRTLKGSIELSRIKCVEIVKSDISIPCHYKYPFQTLVYLQVVHDNYLLYVFAPDCESRQRWVLTLKEETRNNNSLVSKYHPNFWMDGRWRCCSQLEKPAVGCAPYDPSKNASKKPLPPTPEDNRRSFQEPEETLVIALYDYQTNDPQELALRCDEEYYLLDSSEIHWWRVQDKNGHEGYAPSSYLVEKSPNNLETYEWYNKSISRDKAEKLLLDTGKEGAFMVRDSRTPGTYTVSVFTKAIISENPCIKHYHIKETNDSPKRYYVAEKYVFDSIPLLIQYHQYNGGGLVTRLRYPVCSWRQKAPVTAGLRYGKWVIQPSELTFVQEIGSGQFGLVHLGYWLNKDKVAIKTIQEGAMSEEDFIEEAEVMMKLSHPKLVQLYGVCLEQAPICLVFEFMEHGCLSDYLRSQRGLFAAETLLGMCLDVCEGMAYLEKACVIHRDLAARNCLVGENQVIKVSDFGMTRFVLDDQYTSSTGTKFPVKWASPEVFSFSRYSSKSDVWSFGVLMWEVFSEGKIPYENRSNSEVVEDISTGFRLYKPRLASCHVYQIMNHCWKEKPEDRPPFSQLLSQLAEIAEAGL.

The 114-residue stretch at Phe4–Arg117 folds into the PH domain. Residues Asn119–Ser155 form a Btk-type zinc finger. Zn(2+) contacts are provided by His127, Cys138, Cys139, and Cys149. Residues Asp153–Phe174 are disordered. Residues Pro177–Pro237 form the SH3 domain. Tyr186 is modified (phosphotyrosine; by autocatalysis). In terms of domain architecture, SH2 spans Trp245 to Val343. The region spanning Leu368–Ile620 is the Protein kinase domain. ATP-binding positions include Ile374–Val382 and Lys396. Asp487 (proton acceptor) is an active-site residue. Residue Tyr517 is modified to Phosphotyrosine; by LCK. Ser570 is subject to Phosphoserine.

Belongs to the protein kinase superfamily. Tyr protein kinase family. TEC subfamily. In terms of assembly, homooligomerizes; this association negatively regulates kinase activity. Interacts with PPIA/CYPA; this interaction regulates TCR signal strength via a proline-directed conformational switch in ITK. Interacts with THEMIS. Interacts with FASLG. Interacts with VAV1; this interaction is important for VAV1 localization and TCR-induced actin polarization. Interacts with TBX21. Requires Zn(2+) as cofactor. In terms of processing, phosphorylated at Tyr-517 in the activation loop of the kinase domain by LCK. Subsequent autophosphorylation at Tyr-186 leads to the kinase activation. The autophosphorylated Tyr-186 lies within the substrate binding sequence of the SH3 domain. Ubiquitinated. In terms of tissue distribution, is detected in the thymus, lymph node and very faintly in the spleen, but is not detected in the liver, lung, kidney, heart, brain, intestine or testis. Expressed in T-lymphocytes and mast cells. It may also be expressed in natural killer cells.

It localises to the cytoplasm. It is found in the nucleus. The enzyme catalyses L-tyrosyl-[protein] + ATP = O-phospho-L-tyrosyl-[protein] + ADP + H(+). Its function is as follows. Tyrosine kinase that plays an essential role in regulation of the adaptive immune response. Regulates the development, function and differentiation of conventional T-cells and nonconventional NKT-cells. When antigen presenting cells (APC) activate T-cell receptor (TCR), a series of phosphorylation lead to the recruitment of ITK to the cell membrane, in the vicinity of the stimulated TCR receptor, where it is phosphorylated by LCK. Phosphorylation leads to ITK autophosphorylation and full activation. Once activated, phosphorylates PLCG1, leading to the activation of this lipase and subsequent cleavage of its substrates. In turn, the endoplasmic reticulum releases calcium in the cytoplasm and the nuclear activator of activated T-cells (NFAT) translocates into the nucleus to perform its transcriptional duty. Phosphorylates 2 essential adapter proteins: the linker for activation of T-cells/LAT protein and LCP2. Then, a large number of signaling molecules such as VAV1 are recruited and ultimately lead to lymphokine production, T-cell proliferation and differentiation. Required for TCR-mediated calcium response in gamma-delta T-cells, may also be involved in the modulation of the transcriptomic signature in the Vgamma2-positive subset of immature gamma-delta T-cells. Phosphorylates TBX21 at 'Tyr-525' and mediates its interaction with GATA3. The protein is Tyrosine-protein kinase ITK/TSK (Itk) of Mus musculus (Mouse).